Consider the following 188-residue polypeptide: Putative manganese efflux pump MntP (188 aa).

The next 6 membrane-spanning stretches (helical) occupy residues 3-23 (LYAL…VALA), 35-55 (IAAT…AGWV), 63-83 (FISE…GLKM), 104-126 (WMTV…GLAF), 140-160 (MAAT…GVLF), and 167-187 (AGGL…LGLI).

This sequence belongs to the MntP (TC 9.B.29) family.

The protein resides in the cell inner membrane. Probably functions as a manganese efflux pump. In Neisseria gonorrhoeae (strain ATCC 700825 / FA 1090), this protein is Putative manganese efflux pump MntP.